The chain runs to 290 residues: ATP synthase gamma chain (290 aa).

This sequence belongs to the ATPase gamma chain family. In terms of assembly, F-type ATPases have 2 components, CF(1) - the catalytic core - and CF(0) - the membrane proton channel. CF(1) has five subunits: alpha(3), beta(3), gamma(1), delta(1), epsilon(1). CF(0) has three main subunits: a, b and c.

It is found in the cell inner membrane. Produces ATP from ADP in the presence of a proton gradient across the membrane. The gamma chain is believed to be important in regulating ATPase activity and the flow of protons through the CF(0) complex. The sequence is that of ATP synthase gamma chain from Gemmatimonas aurantiaca (strain DSM 14586 / JCM 11422 / NBRC 100505 / T-27).